The chain runs to 604 residues: MPTDQVCLGRKRPLPSCPNPLFLQWLTELRDSAKEKGLKTHFVYQKAINSLKKYPLPLKNGKEAKILQNFGDGICKILDERLQKHYRENGSDAAVHLASSKQMEESQKEPSGNFSEHTKLTQKEVRKEKGAKKKREYVPQKRSGGYAVLLTLYRHMQMPGSKGFMFRNELQTEAQPLCEKSFTVPDLGSKYTAWSSVSTLIQKELVVKTHNPARYSLTDQGLSLAEKLDSEETGTRHEDVDSQDGQNVVDLTLEEEDEDEEKESWSSERPAVALPVNQARGLMSESDPMGKSQTSETGRTAMGWHLSPGSYDIVLCVDLCETTGGSSVRKQELVKELQRNSVTFDVRKLNVGDFLWVARERVTPVPGQLRPPVGKELVLDYIIERKRMDDLCGSIIDGRFREQKFRLKRCGLRKPIYLVEECGSAAAHLSIPESTLQQAIVNTQVVDGFFVKRVQDAKESAAYLTIMTRYLQKLYQNCTLLCRSRELEGDGEAESEKMVANLSCSLMAFTEFNYGAIKNKCQTVREVFARQLMQISGVSGDKAAAVLKHYSTVSSLLQAYDKCSSETEKEKLLSSVKYGKLKRNLGPALSRTIYQLYCTRGPLS.

Disordered regions lie at residues 93–138, 227–248, and 253–272; these read AAVH…REYV, KLDS…GQNV, and LEEE…RPAV. Composition is skewed to basic and acidic residues over residues 116-128 and 227-240; these read EHTK…VRKE and KLDS…HEDV. Residues 138–254 form a winged helix domain (WHD); critical for endonuclease activity region; sequence VPQKRSGGYA…GQNVVDLTLE (117 aa). Acidic residues predominate over residues 253–262; that stretch reads LEEEDEDEEK. In terms of domain architecture, ERCC4 spans 314-423; the sequence is VLCVDLCETT…KPIYLVEECG (110 aa). Residues Asp-318, Glu-321, and Asp-353 contribute to the active site. Positions 318, 321, 353, 384, and 385 each coordinate Mg(2+). Positions 524 to 598 are helix-hairpin-helix (2HhH); involved in DNA recognition and bending; that stretch reads VREVFARQLM…LSRTIYQLYC (75 aa).

It belongs to the XPF family. In terms of assembly, part of the heterodimeric DNA structure-specific endonuclease complex MUS81-EME1. Part of the heterodimeric DNA structure-specific endonuclease complex MUS81-EME2. It depends on Mg(2+) as a cofactor.

The protein resides in the nucleus. The protein localises to the nucleolus. Its function is as follows. Catalytic subunit of two functionally distinct, structure-specific, heterodimeric DNA endonucleases MUS81-EME1 and MUS81-EME2 that are involved in the maintenance of genome stability. Both endonucleases have essentially the same substrate specificity though MUS81-EME2 is more active than its MUS81-EME1 counterpart. Both cleave 3'-flaps and nicked Holliday junctions, and exhibit limited endonuclease activity with 5' flaps and nicked double-stranded DNAs. MUS81-EME2 which is active during the replication of DNA is more specifically involved in replication fork processing. Replication forks frequently encounter obstacles to their passage, including DNA base lesions, DNA interstrand cross-links, difficult-to-replicate sequences, transcription bubbles, or tightly bound proteins. One mechanism for the restart of a stalled replication fork involves nucleolytic cleavage mediated by the MUS81-EME2 endonuclease. By acting upon the stalled fork, MUS81-EME2 generates a DNA double-strand break (DSB) that can be repaired by homologous recombination, leading to the restoration of an active fork. MUS81-EME2 could also function in telomere maintenance. MUS81-EME1, on the other hand, is active later in the cell cycle and functions in the resolution of mitotic recombination intermediates including the Holliday junctions, the four-way DNA intermediates that form during homologous recombination. The chain is Structure-specific endonuclease subunit MUS81 (mus81) from Danio rerio (Zebrafish).